A 99-amino-acid chain; its full sequence is Co-chaperonin GroES (99 aa).

This sequence belongs to the GroES chaperonin family. In terms of assembly, heptamer of 7 subunits arranged in a ring. Interacts with the chaperonin GroEL.

It is found in the cytoplasm. Functionally, together with the chaperonin GroEL, plays an essential role in assisting protein folding. The GroEL-GroES system forms a nano-cage that allows encapsulation of the non-native substrate proteins and provides a physical environment optimized to promote and accelerate protein folding. GroES binds to the apical surface of the GroEL ring, thereby capping the opening of the GroEL channel. The protein is Co-chaperonin GroES of Corynebacterium kroppenstedtii (strain DSM 44385 / JCM 11950 / CIP 105744 / CCUG 35717).